The primary structure comprises 1741 residues: Meiosis regulator and mRNA stability factor 1 (1741 aa).

Residues 345 to 482 (IGVFWDIENC…ALLHHAHELV (138 aa)) form the NYN domain. Disordered regions lie at residues 594–636 (KVKS…GSVI), 659–678 (TENH…SHAA), and 683–716 (LTTK…PVDK). Over residues 659–668 (TENHQEHLRE) the composition is skewed to basic and acidic residues. One can recognise an RRM domain in the interval 788–867 (ADIQISNIDY…KRIQVSLATG (80 aa)). HTH OST-type domains are found at residues 872–946 (SLSL…SPLG), 1000–1076 (SLKT…HNKP), 1097–1171 (QLIQ…LTHR), 1173–1248 (QVKR…IPKR), 1257–1332 (RTKQ…TEVE), 1333–1408 (QVKA…INRK), 1409–1483 (SLRT…VRLT), and 1484–1558 (NLYM…LKND). Over residues 1684–1700 (KLTSGSVASSTAENTSV) the composition is skewed to polar residues. The interval 1684–1727 (KLTSGSVASSTAENTSVPPRHSSETQLNKEAMDSPAKKQHKNKV) is disordered.

The protein localises to the peroxisome. Essential regulator of oogenesis required for female meiotic progression to repress transposable elements and preventing their mobilization, which is essential for the germline integrity. The polypeptide is Meiosis regulator and mRNA stability factor 1 (Gallus gallus (Chicken)).